Here is a 1339-residue protein sequence, read N- to C-terminus: Receptor tyrosine-protein kinase erbB-3 (1339 aa).

The N-terminal stretch at 1-19 (MRATGTLQVLCFLLSLARG) is a signal peptide. At 20–643 (SEMGNSQAVC…EVLMSKPHLV (624 aa)) the chain is on the extracellular side. N-linked (GlcNAc...) asparagine glycosylation is present at Asn126. Intrachain disulfides connect Cys186–Cys194, Cys190–Cys202, Cys210–Cys218, Cys214–Cys226, Cys227–Cys235, Cys231–Cys243, Cys246–Cys255, Cys259–Cys286, Cys290–Cys301, Cys305–Cys320, and Cys323–Cys327. The N-linked (GlcNAc...) asparagine glycan is linked to Asn250. Residues Asn353, Asn408, Asn414, Asn437, and Asn469 are each glycosylated (N-linked (GlcNAc...) asparagine). 10 disulfide bridges follow: Cys500–Cys509, Cys504–Cys517, Cys520–Cys529, Cys533–Cys549, Cys552–Cys565, Cys556–Cys573, Cys576–Cys585, Cys589–Cys610, Cys613–Cys621, and Cys617–Cys629. Asn522 carries N-linked (GlcNAc...) asparagine glycosylation. Asn566 carries an N-linked (GlcNAc...) asparagine glycan. N-linked (GlcNAc...) asparagine glycosylation occurs at Asn616. Residues 644 to 662 (IAVTVGLAVILMILGGSFL) form a helical membrane-spanning segment. The Cytoplasmic segment spans residues 663 to 1339 (YWRGRRIQNK…LFPKANAQRT (677 aa)). Ser684 is subject to Phosphoserine. The region spanning 707-964 (LRKLKVLGSG…TFKELANEFT (258 aa)) is the Protein kinase domain. ATP contacts are provided by residues 713–721 (LGSGVFGTV), Lys740, 786–788 (QYL), and 832–837 (DLALRN). Asp832 acts as the Proton acceptor in catalysis. At Ser980 the chain carries Phosphoserine. Low complexity predominate over residues 1023-1036 (SLGSALSLPTGTLT). 2 disordered regions span residues 1023 to 1052 (SLGSALSLPTGTLTRPRGSQSLLSPSSGYM) and 1078 to 1215 (PISL…GSLE). Positions 1039–1052 (RGSQSLLSPSSGYM) are enriched in polar residues. Low complexity predominate over residues 1172 to 1184 (GTLSSVGLSSVLG). A compositionally biased stretch (acidic residues) spans 1185–1195 (TEEEDEDEEYE).

This sequence belongs to the protein kinase superfamily. Tyr protein kinase family. EGF receptor subfamily. Monomer and homodimer. Heterodimer with each of the other ERBB receptors (Potential). Interacts with CSPG5, PA2G4, GRB7, MYOC and MUC1. Found in a ternary complex with NRG1 and ITGAV:ITGB3 or ITGA6:ITGB4. In terms of processing, autophosphorylated. Ligand-binding increases phosphorylation on tyrosine residues and promotes its association with the p85 subunit of phosphatidylinositol 3-kinase.

Its subcellular location is the membrane. The enzyme catalyses L-tyrosyl-[protein] + ATP = O-phospho-L-tyrosyl-[protein] + ADP + H(+). Functionally, tyrosine-protein kinase that plays an essential role as cell surface receptor for neuregulins. Binds to neuregulin-1 (NRG1) and is activated by it; ligand-binding increases phosphorylation on tyrosine residues and promotes its association with the p85 subunit of phosphatidylinositol 3-kinase. May also be activated by CSPG5. Involved in the regulation of myeloid cell differentiation. In Rattus norvegicus (Rat), this protein is Receptor tyrosine-protein kinase erbB-3 (Erbb3).